A 392-amino-acid polypeptide reads, in one-letter code: MLDFMDNVQHAFYEASHWNVDNSYGALNATARALLDFDSPRGLRLQISSLAAPNFATSYTLGSVGVVDGSVSYLYSSLPLRKDFKSSRIDLHHVIRGFKHLQELRKPDEKWSWEQWHAGRRVDRKDTLLYGRIFLPQSRLEALYLRRLAPTRQLRIAAVSDSNLNNGGTILTLLQTDSGKYSTEYMYSTDSALMGLRGLYNFGPDPRVAPTEPTRPEQVEPVHGRFSAGAELYYGILNKSGGMSTGLRFTTLPNHPGFPYTMTLTLNPLMGNLSSTYAVKAGPSLALCSRFDFNFYSYESELQLGCELWRRRGNTDTEWAVKKLRPDWKRPAASPDDDVAGVLKAKVDQDGRVGLLWEGRIKELLFTLGASLDLKKREQIFRSVGIELQYSS.

This sequence belongs to the MDM10 family. As to quaternary structure, component of the ER-mitochondria encounter structure (ERMES) or MDM complex, composed of MMM1, MDM10, MDM12 and MDM34. Associates with the mitochondrial outer membrane sorting assembly machinery SAM(core) complex.

It is found in the mitochondrion outer membrane. Its function is as follows. Component of the ERMES/MDM complex, which serves as a molecular tether to connect the endoplasmic reticulum and mitochondria. Components of this complex are involved in the control of mitochondrial shape and protein biogenesis and may function in phospholipid exchange. MDM10 is involved in the late assembly steps of the general translocase of the mitochondrial outer membrane (TOM complex). Functions in the TOM40-specific route of the assembly of outer membrane beta-barrel proteins, including the association of TOM40 with the receptor TOM22 and small TOM proteins. Can associate with the SAM(core) complex as well as the MDM12-MMM1 complex, both involved in late steps of the major beta-barrel assembly pathway, that is responsible for biogenesis of all outer membrane beta-barrel proteins. May act as a switch that shuttles between both complexes and channels precursor proteins into the TOM40-specific pathway. Plays a role in mitochondrial morphology and in the inheritance of mitochondria. In Phaeosphaeria nodorum (strain SN15 / ATCC MYA-4574 / FGSC 10173) (Glume blotch fungus), this protein is Mitochondrial distribution and morphology protein 10.